We begin with the raw amino-acid sequence, 121 residues long: Large ribosomal subunit protein bL20 (121 aa).

It belongs to the bacterial ribosomal protein bL20 family.

Binds directly to 23S ribosomal RNA and is necessary for the in vitro assembly process of the 50S ribosomal subunit. It is not involved in the protein synthesizing functions of that subunit. The polypeptide is Large ribosomal subunit protein bL20 (Chlamydia felis (strain Fe/C-56) (Chlamydophila felis)).